A 466-amino-acid polypeptide reads, in one-letter code: MADDKSQIKINFFTNEEDESLHTSDAPLYVPVSLKRYGLSEIVNHLLKKDGETDETKPVPFDFLIDGVLLRTSLEDYLVKNGLSSEASLNLEYTRAVLPPSFLASFNNDDWISSLDTINPLSASVKASNMSISQPKILSGSYDGIVRTYNMSGKVEKQYVGHSGPIRSVKWISPTRIVSSGNDRQVRLWKTSIDSNIEDDEEIEDGRTLAILEGHKAPVVSLAVEYQNNRILSAGYDKAIGFWSTNYREMTTIQPLEYDSNVISTSSKKRRKMALQDSTIRRRSPLSFLEGHSQPVEDVIFDFNDATVGYSVSQDHTIKTWDLVTSRCVDTRTTGYSLLSLLQLPSLNLLVCGSSARHINLFDPRVSSTTTEQTNNQKLIGHTNFVVGLSKCPTNDNMFASCSHDGTVKVWDVRSEKSLYTITREQNNAAKGQDKVFSVIWDNDIGIISGGQDKKIQINKGSDITK.

Residues 8-95 are ubiquitin-like (UBL) domain; it reads IKINFFTNEE…EASLNLEYTR (88 aa). Residues 105 to 466 are sufficient for interaction with ERB1 and association with 66S pre-ribosomes; sequence SFNNDDWISS…QINKGSDITK (362 aa). WD repeat units lie at residues 120-159, 161-199, 214-253, 291-331, 333-372, 381-421, and 431-466; these read PLSASVKASNMSISQPKILSGSYDGIVRTYNMSGKVEKQY, GHSGPIRSVKWISPTRIVSSGNDRQVRLWKTSIDSNIED, GHKAPVVSLAVEYQNNRILSAGYDKAIGFWSTNYREMTTI, GHSQ…CVDT, TTGYSLLSLLQLPSLNLLVCGSSARHINLFDPRVSSTTTE, GHTN…SLYT, and KGQDKVFSVIWDNDIGIISGGQDKKIQINKGSDITK.

The protein belongs to the WD repeat WDR12/YTM1 family. As to quaternary structure, component of the NOP7 complex, composed of ERB1, NOP7 and YTM1. The complex is held together by ERB1, which interacts with NOP7 via its N-terminal domain and with YTM1 via a high-affinity interaction between the seven-bladed beta-propeller domains of the 2 proteins. The NOP7 complex associates with the 66S pre-ribosome. Interacts (via UBL domain) with MDN1 (via VWFA/MIDAS domain).

It localises to the nucleus. It is found in the nucleolus. The protein localises to the nucleoplasm. Component of the NOP7 complex, which is required for maturation of the 25S and 5.8S ribosomal RNAs and formation of the 60S ribosome. This chain is Ribosome biogenesis protein YTM1, found in Debaryomyces hansenii (strain ATCC 36239 / CBS 767 / BCRC 21394 / JCM 1990 / NBRC 0083 / IGC 2968) (Yeast).